A 140-amino-acid chain; its full sequence is 3-hydroxyacyl-[acyl-carrier-protein] dehydratase FabZ (140 aa).

Residue H47 is part of the active site.

Belongs to the thioester dehydratase family. FabZ subfamily.

Its subcellular location is the cytoplasm. The enzyme catalyses a (3R)-hydroxyacyl-[ACP] = a (2E)-enoyl-[ACP] + H2O. Functionally, involved in unsaturated fatty acids biosynthesis. Catalyzes the dehydration of short chain beta-hydroxyacyl-ACPs and long chain saturated and unsaturated beta-hydroxyacyl-ACPs. This is 3-hydroxyacyl-[acyl-carrier-protein] dehydratase FabZ from Streptococcus pneumoniae (strain CGSP14).